The primary structure comprises 102 residues: Glutaredoxin (102 aa).

Residues 3–102 (MTKTKELVSS…VPLLTEAGAV (100 aa)) enclose the Glutaredoxin domain. Cysteine 23 and cysteine 26 are oxidised to a cystine.

Belongs to the glutaredoxin family. CPYC subfamily.

It is found in the cytoplasm. Its function is as follows. Has a glutathione-disulfide oxidoreductase activity in the presence of NADPH and glutathione reductase. Reduces low molecular weight disulfides and proteins. In Ricinus communis (Castor bean), this protein is Glutaredoxin.